The chain runs to 345 residues: KRR1 small subunit processome component homolog (345 aa).

Residues 125 to 193 (DIIKIGNLVH…VRDIVLETMN (69 aa)) form the KH domain. Basic residues predominate over residues 232 to 245 (NISKRKQPKVKKQK). 2 disordered regions span residues 232–260 (NISK…ESKV) and 273–329 (QEQK…VDVK). Positions 270–298 (FLNQEQKQAKRNQERTEKQKEAAKRQDER) form a coiled coil. Composition is skewed to basic and acidic residues over residues 276 to 302 (KQAK…RNKD) and 315 to 329 (LKKE…VDVK).

Belongs to the KRR1 family. Monomer. Component of the ribosomal small subunit (SSU) processome.

It is found in the nucleus. The protein resides in the nucleolus. Its function is as follows. Required for 40S ribosome biogenesis. Involved in nucleolar processing of pre-18S ribosomal RNA and ribosome assembly. Binds to RNA. Required for female germline development, cell viability during eye development and for survival of dividing cells and epithelial cells during early wing disk development. The polypeptide is KRR1 small subunit processome component homolog (Drosophila erecta (Fruit fly)).